Consider the following 418-residue polypeptide: Synaptotagmin-15 (418 aa).

Over 1–4 (MAEQ) the chain is Extracellular. The chain crosses the membrane as a helical; Signal-anchor for type III membrane protein span at residues 5-27 (LAFLIGGIIGGLLLLIGVSCCLW). The Cytoplasmic segment spans residues 28–418 (RRFCATFTYE…WHALCRPTEP (391 aa)). 2 consecutive C2 domains span residues 144-261 (CLGR…HRII) and 275-396 (EFGD…EHWG).

The protein belongs to the synaptotagmin family. In terms of assembly, homodimer. Isoform 1 and isoform 2 are expressed in heart, lung, skeletal muscle and testis; not detected in brain, liver and kidney. Isoform 1 is expressed in spleen.

It localises to the membrane. In terms of biological role, may be involved in the trafficking and exocytosis of secretory vesicles in non-neuronal tissues. The polypeptide is Synaptotagmin-15 (Syt15) (Mus musculus (Mouse)).